The following is a 389-amino-acid chain: Type II methyltransferase M1.ScrFI (389 aa).

Positions 16-71 (IKEKRLRLNMTQKELADAVGMSKNGDRTIRRWENGETCPSQLEISAILRFPEIAPF) constitute an HTH cro/C1-type domain. Positions 79-387 (YKMIDLFAGI…EKMLEVLEKS (309 aa)) constitute an SAM-dependent MTase C5-type domain. Residue cysteine 149 is part of the active site.

Belongs to the class I-like SAM-binding methyltransferase superfamily. C5-methyltransferase family.

It carries out the reaction a 2'-deoxycytidine in DNA + S-adenosyl-L-methionine = a 5-methyl-2'-deoxycytidine in DNA + S-adenosyl-L-homocysteine + H(+). Functionally, a methylase, recognizes the double-stranded sequence 5'-CCNGG-3', methylates C-2 on both strands, and protects the DNA from cleavage by the ScrFI endonuclease. The chain is Type II methyltransferase M1.ScrFI (scrFIAM) from Lactococcus lactis subsp. cremoris (Streptococcus cremoris).